A 436-amino-acid chain; its full sequence is EPS I polysaccharide export inner membrane protein EpsE (436 aa).

The next 12 helical transmembrane spans lie at 20–40, 49–69, 91–111, 132–152, 160–180, 184–204, 234–254, 261–281, 307–327, 341–361, 375–395, and 396–416; these read VLGL…NIML, FGLF…LATG, LCAF…ALYL, MAAI…FLYA, ASVS…MGPI, VVAL…QLVI, VLTT…LAAM, LALF…PATL, ALLF…LLAG, AAAS…SVLL, FAMA…ALRL, and GYGA…LILF.

The protein to E.coli bicyclomycin resistance protein (BCR).

The protein resides in the cell inner membrane. Functionally, probably involved in polymerization and/or export of exopolysaccharide EPS I which functions as a virulence factor. May play a role in export of EPS I or its intermediates across the membranes. This Ralstonia nicotianae (strain ATCC BAA-1114 / GMI1000) (Ralstonia solanacearum) protein is EPS I polysaccharide export inner membrane protein EpsE (epsE).